Consider the following 493-residue polypeptide: Cholesteryl ester transfer protein (493 aa).

Positions 1–17 (MLAATVLTLALLGNVHA) are cleaved as a signal peptide. Residues Asn-59 and Asn-105 are each glycosylated (N-linked (GlcNAc...) asparagine). A disulfide bridge links Cys-160 with Cys-201. N-linked (GlcNAc...) asparagine glycans are attached at residues Asn-257, Asn-358, and Asn-413.

Belongs to the BPI/LBP/Plunc superfamily. BPI/LBP family. Probably primarily expressed in liver and adipose tissues. Detected in adrenal gland, mesenteric fat, spleen and aorta.

It is found in the secreted. It carries out the reaction cholesteryl (9Z-octadecenoate)(in) = cholesteryl (9Z-octadecenoate)(out). The enzyme catalyses 1,2,3-tri-(9Z-octadecenoyl)-glycerol(in) = 1,2,3-tri-(9Z-octadecenoyl)-glycerol(out). It catalyses the reaction cholesteryl (9Z,12Z)-octadecadienoate(in) = cholesteryl (9Z,12Z)-octadecadienoate(out). Its function is as follows. Involved in the transfer of neutral lipids, including cholesteryl ester and triglyceride, among lipoprotein particles. Allows the net movement of cholesteryl ester from high density lipoproteins/HDL to triglyceride-rich very low density lipoproteins/VLDL, and the equimolar transport of triglyceride from VLDL to HDL. Regulates the reverse cholesterol transport, by which excess cholesterol is removed from peripheral tissues and returned to the liver for elimination. This Macaca fascicularis (Crab-eating macaque) protein is Cholesteryl ester transfer protein.